Here is a 987-residue protein sequence, read N- to C-terminus: Mediator of RNA polymerase II transcription subunit 24 (987 aa).

6 short sequence motifs (LXXLL motif) span residues 128–132 (LHWLL), 344–348 (LTPLL), 446–450 (LDLLL), 555–559 (LVALL), 786–790 (LPGLL), and 855–859 (LMRLL). Phosphoserine occurs at positions 860 and 871.

It belongs to the Mediator complex subunit 24 family. Component of the Mediator complex, which is composed of MED1, MED4, MED6, MED7, MED8, MED9, MED10, MED11, MED12, MED13, MED13L, MED14, MED15, MED16, MED17, MED18, MED19, MED20, MED21, MED22, MED23, MED24, MED25, MED26, MED27, MED29, MED30, MED31, CCNC, CDK8 and CDC2L6/CDK11. The MED12, MED13, CCNC and CDK8 subunits form a distinct module termed the CDK8 module. Mediator containing the CDK8 module is less active than Mediator lacking this module in supporting transcriptional activation. Individual preparations of the Mediator complex lacking one or more distinct subunits have been variously termed ARC, CRSP, DRIP, PC2, SMCC and TRAP. Interacts with AR. Interacts with MED1 and MED10. As to expression, expressed in the adrenal gland, brain, epididymis, heart, kidney, liver, ovary, pancreas, prostate, skeletal muscle, small intestine, spleen, stomach, testis and thymus.

It is found in the nucleus. Functionally, component of the Mediator complex, a coactivator involved in the regulated transcription of nearly all RNA polymerase II-dependent genes. Mediator functions as a bridge to convey information from gene-specific regulatory proteins to the basal RNA polymerase II transcription machinery. Mediator is recruited to promoters by direct interactions with regulatory proteins and serves as a scaffold for the assembly of a functional preinitiation complex with RNA polymerase II and the general transcription factors. Required for basal and activator-dependent transcription. This Mus musculus (Mouse) protein is Mediator of RNA polymerase II transcription subunit 24 (Med24).